We begin with the raw amino-acid sequence, 254 residues long: MSGSYPSPKGIHPFLLLALVVGGAVQASKIVGGHEARPHSRPYVASLQLSRFPGSHFCGGTLIHPRFVLTAAHCLQDISWQLVTVVLGAHDLLSSEPEQQKFTISQVFQNNYNPEENLNDVLLLQLNRTASLGKEVAVASLPQQDQTLSQGTQCLAMGWGRLGTQAPTPRVLQELNVTVVTFLCREHNVCTLVPRRAAGICFGDSGGPLICNGILHGVDSFVIRECASLQFPDFFARVSMYVDWIQNVLRGAEP.

An N-terminal signal peptide occupies residues 1 to 27 (MSGSYPSPKGIHPFLLLALVVGGAVQA). Positions 28-29 (SK) are excised as a propeptide. The 221-residue stretch at 30-250 (IVGGHEARPH…YVDWIQNVLR (221 aa)) folds into the Peptidase S1 domain. A disulfide bridge connects residues C58 and C74. Catalysis depends on charge relay system residues H73 and D120. Residues N127 and N176 are each glycosylated (N-linked (GlcNAc...) asparagine). Cystine bridges form between C154–C211, C184–C190, and C201–C226. The active-site Charge relay system is the S205. Residues 251–254 (GAEP) constitute a propeptide that is removed on maturation.

This sequence belongs to the peptidase S1 family. Elastase subfamily. May form dimers. Interacts with CD177; the interaction tethers PRTN3 to the cell surface; the interaction is direct. Interacts with SERPINB1. Interacts with ADGRG3.

Its subcellular location is the lysosome. The protein resides in the secreted. It is found in the cell membrane. It localises to the membrane raft. It carries out the reaction Hydrolysis of proteins, including elastin, by preferential cleavage: -Ala-|-Xaa- &gt; -Val-|-Xaa-.. Its function is as follows. Serine protease that degrades elastin, fibronectin, laminin, vitronectin, and collagen types I, III, and IV (in vitro). By cleaving and activating receptor F2RL1/PAR-2, enhances endothelial cell barrier function and thus vascular integrity during neutrophil transendothelial migration. May play a role in neutrophil transendothelial migration, probably when associated with CD177. Triggers inflammatory processes in neutrophils by interacting with ADGRG3 upstream of F2RL1/PAR2 activation. This is Myeloblastin (Prtn3) from Mus musculus (Mouse).